Reading from the N-terminus, the 112-residue chain is Cell cycle protein GpsB (112 aa).

The stretch at 38 to 72 forms a coiled coil; it reads IKDYEAFHKEFEQLKQQNARLKRELEEQKLVATQV.

The protein belongs to the GpsB family. Forms polymers through the coiled coil domains. Interacts with PBP1, MreC and EzrA.

It is found in the cytoplasm. Functionally, divisome component that associates with the complex late in its assembly, after the Z-ring is formed, and is dependent on DivIC and PBP2B for its recruitment to the divisome. Together with EzrA, is a key component of the system that regulates PBP1 localization during cell cycle progression. Its main role could be the removal of PBP1 from the cell pole after pole maturation is completed. Also contributes to the recruitment of PBP1 to the division complex. Not essential for septum formation. This is Cell cycle protein GpsB from Bacillus cereus (strain ZK / E33L).